The sequence spans 290 residues: Ribonuclease HIII (290 aa).

An RNase H type-2 domain is found at 78 to 290; sequence LPLIGTDEVG…FKNTEKAKNA (213 aa). A divalent metal cation-binding residues include aspartate 84, glutamate 85, and aspartate 187.

This sequence belongs to the RNase HII family. RnhC subfamily. Mn(2+) serves as cofactor. Mg(2+) is required as a cofactor.

The protein resides in the cytoplasm. It carries out the reaction Endonucleolytic cleavage to 5'-phosphomonoester.. In terms of biological role, endonuclease that specifically degrades the RNA of RNA-DNA hybrids. The protein is Ribonuclease HIII of Streptococcus pneumoniae (strain P1031).